The primary structure comprises 290 residues: 33 kDa chaperonin (290 aa).

Disulfide bonds link cysteine 235/cysteine 237 and cysteine 268/cysteine 271.

It belongs to the HSP33 family. Post-translationally, under oxidizing conditions two disulfide bonds are formed involving the reactive cysteines. Under reducing conditions zinc is bound to the reactive cysteines and the protein is inactive.

The protein resides in the cytoplasm. Its function is as follows. Redox regulated molecular chaperone. Protects both thermally unfolding and oxidatively damaged proteins from irreversible aggregation. Plays an important role in the bacterial defense system toward oxidative stress. In Streptococcus pyogenes serotype M3 (strain ATCC BAA-595 / MGAS315), this protein is 33 kDa chaperonin.